A 241-amino-acid polypeptide reads, in one-letter code: Uridylate kinase (241 aa).

Position 15 to 18 (15 to 18 (KMSG)) interacts with ATP. The segment at 23 to 28 (GAEGFG) is involved in allosteric activation by GTP. Gly57 lines the UMP pocket. Residues Gly58 and Arg62 each coordinate ATP. Residues Asp77 and 138-145 (TGNPLFTT) contribute to the UMP site. Positions 165, 171, and 174 each coordinate ATP.

It belongs to the UMP kinase family. As to quaternary structure, homohexamer.

The protein localises to the cytoplasm. It catalyses the reaction UMP + ATP = UDP + ADP. It functions in the pathway pyrimidine metabolism; CTP biosynthesis via de novo pathway; UDP from UMP (UMPK route): step 1/1. Allosterically activated by GTP. Inhibited by UTP. In terms of biological role, catalyzes the reversible phosphorylation of UMP to UDP. This is Uridylate kinase from Blochmanniella pennsylvanica (strain BPEN).